A 548-amino-acid chain; its full sequence is Telomerase Cajal body protein 1 (548 aa).

The interval 1–142 (MKTLETQPLA…SGEPAAEDEG (142 aa)) is disordered. A compositionally biased stretch (low complexity) spans 15–31 (PSDQDPAPAHPSPHASP). Phosphoserine occurs at positions 26, 30, and 54. Ser64 carries the phosphoserine; by ATM modification. Ser85, Ser90, Ser112, and Ser114 each carry phosphoserine. 6 WD repeats span residues 167–206 (QPENFLKGCKWAPDGSCILTNSADNILRIYNLPPELYHEG), 222–267 (EGDT…LRAS), 272–313 (NHLD…RDCE), 323–364 (GQSG…ALLG), 365–405 (GHQG…YPLW), and 411–450 (VTTNQRIYFDLDPTGQFLVSGSTSGAVSVWDTDGPGNDGK). Thr489 carries the post-translational modification Phosphothreonine. Ser491 carries the post-translational modification Phosphoserine. Residues 526–548 (SIPDDHQGEKGQGGTEGGVGELI) form a disordered region. Positions 535 to 548 (KGQGGTEGGVGELI) are enriched in gly residues.

This sequence belongs to the TCAB1 family. In terms of assembly, component of the telomerase holoenzyme complex composed of one molecule of TERT, one molecule of WRAP53/TCAB1, two molecules of H/ACA ribonucleoprotein complex subunits DKC1, NOP10, NHP2 and GAR1, and a telomerase RNA template component (TERC). The telomerase holoenzyme complex is associated with TEP1, SMG6/EST1A and POT1. Interacts with the chaperonin-containing T-complex (TRiC) complex; which mediates the folding of WRAP53/TCAB1. Interacts with COIL. Interacts with SMN1. Interacts with RNF8. Interacts with histone H2AX. In terms of processing, phosphorylated at Ser-64 by ATM in response to DNA damage, promoting its interaction with histone H2AX and localization to sites of DNA double-strand breaks. Expressed in all tissues and cell lines examined.

The protein resides in the nucleus. It is found in the cajal body. It localises to the chromosome. Its subcellular location is the telomere. RNA chaperone that plays a key role in telomere maintenance and RNA localization to Cajal bodies. Specifically recognizes and binds the Cajal body box (CAB box) present in both small Cajal body RNAs (scaRNAs) and telomerase RNA template component (TERC). Essential component of the telomerase holoenzyme complex, a ribonucleoprotein complex essential for the replication of chromosome termini that elongates telomeres in most eukaryotes. In the telomerase holoenzyme complex, required to stimulate the catalytic activity of the complex. Acts by specifically binding the CAB box of the TERC RNA and controlling the folding of the CR4/CR5 region of the TERC RNA, a critical step for telomerase activity. In addition, also controls telomerase holoenzyme complex localization to Cajal body. During S phase, required for delivery of TERC to telomeres during S phase and for telomerase activity. In addition to its role in telomere maintenance, also required for Cajal body formation, probably by mediating localization of scaRNAs to Cajal bodies. Also plays a role in DNA repair: phosphorylated by ATM in response to DNA damage and relocalizes to sites of DNA double-strand breaks to promote the repair of DNA double-strand breaks. Acts by recruiting the ubiquitin ligase RNF8 to DNA breaks and promote both homologous recombination (HR) and non-homologous end joining (NHEJ). The sequence is that of Telomerase Cajal body protein 1 from Homo sapiens (Human).